A 410-amino-acid chain; its full sequence is Digeranylgeranylglycerophospholipid reductase (410 aa).

FAD-binding residues include Ala-15, Glu-34, Val-118, Asp-286, Gly-298, and Ile-299. A 2,3-bis-O-(geranylgeranyl)-sn-glycerol 1-phospholipid is bound by residues Lys-343 and Ala-379.

The protein belongs to the geranylgeranyl reductase family. DGGGPL reductase subfamily. Requires FAD as cofactor.

It catalyses the reaction a 2,3-bis-O-phytanyl-sn-glycerol 1-phospholipid + 8 A = a 2,3-bis-O-(geranylgeranyl)-sn-glycerol 1-phospholipid + 8 AH2. It carries out the reaction 2,3-bis-O-(phytanyl)-sn-glycerol 1-phosphate + 8 A = 2,3-bis-O-(geranylgeranyl)-sn-glycerol 1-phosphate + 8 AH2. The catalysed reaction is CDP-2,3-bis-O-(geranylgeranyl)-sn-glycerol + 8 AH2 = CDP-2,3-bis-O-(phytanyl)-sn-glycerol + 8 A. The enzyme catalyses archaetidylserine + 8 AH2 = 2,3-bis-O-phytanyl-sn-glycero-3-phospho-L-serine + 8 A. The protein operates within membrane lipid metabolism; glycerophospholipid metabolism. Its function is as follows. Is involved in the reduction of 2,3-digeranylgeranylglycerophospholipids (unsaturated archaeols) into 2,3-diphytanylglycerophospholipids (saturated archaeols) in the biosynthesis of archaeal membrane lipids. Can fully reduce the unsaturated isoprenoid side chains of membrane phospholipids and glycolipids. Is also able to reduce the omega-position isoprene of dolichol phosphate. In Haloferax volcanii (strain ATCC 29605 / DSM 3757 / JCM 8879 / NBRC 14742 / NCIMB 2012 / VKM B-1768 / DS2) (Halobacterium volcanii), this protein is Digeranylgeranylglycerophospholipid reductase.